The sequence spans 214 residues: MEKFILNVEKRERTGKGIARQLRSKGIIPCVIYKNGQSTPVQIPTKELYTFMNIATREKLFVTLKLDGQEKQAILQDYQVDPVTGKLLHVDFMEVSATEKIRVTIPVVLIGEPIGVKQDKGVLQHGISEIEIEAIPEKIPGHIEVDVSHLEVGDAVHVSDIKFEEGIKVISNPEEVIATVTVEEEEAEVAPSIEETVEPEVIKKGKKAEEEEEK.

The interval 187–214 is disordered; the sequence is AEVAPSIEETVEPEVIKKGKKAEEEEEK. Residues 200-214 are compositionally biased toward basic and acidic residues; it reads EVIKKGKKAEEEEEK.

Belongs to the bacterial ribosomal protein bL25 family. CTC subfamily. Part of the 50S ribosomal subunit; part of the 5S rRNA/L5/L18/L25 subcomplex. Contacts the 5S rRNA. Binds to the 5S rRNA independently of L5 and L18.

In terms of biological role, this is one of the proteins that binds to the 5S RNA in the ribosome where it forms part of the central protuberance. This chain is Large ribosomal subunit protein bL25, found in Thermodesulfovibrio yellowstonii (strain ATCC 51303 / DSM 11347 / YP87).